The chain runs to 179 residues: Large ribosomal subunit protein uL5 (179 aa).

Belongs to the universal ribosomal protein uL5 family. In terms of assembly, part of the 50S ribosomal subunit; part of the 5S rRNA/L5/L18/L25 subcomplex. Contacts the 5S rRNA and the P site tRNA. Forms a bridge to the 30S subunit in the 70S ribosome.

Its function is as follows. This is one of the proteins that bind and probably mediate the attachment of the 5S RNA into the large ribosomal subunit, where it forms part of the central protuberance. In the 70S ribosome it contacts protein S13 of the 30S subunit (bridge B1b), connecting the 2 subunits; this bridge is implicated in subunit movement. Contacts the P site tRNA; the 5S rRNA and some of its associated proteins might help stabilize positioning of ribosome-bound tRNAs. This Buchnera aphidicola subsp. Acyrthosiphon pisum (strain APS) (Acyrthosiphon pisum symbiotic bacterium) protein is Large ribosomal subunit protein uL5.